A 380-amino-acid polypeptide reads, in one-letter code: NADPH oxidoreductase (380 aa).

One can recognise an FAD-binding FR-type domain in the interval 58-164 (ARELRGRILG…AAPQGNFVLP (107 aa)). Residues 299 to 380 (GTVTFARSGK…AASGDCVLDI (82 aa)) form the 2Fe-2S ferredoxin-type domain. Cys-333, Cys-338, Cys-341, and Cys-368 together coordinate [2Fe-2S] cluster.

Interacts with DesA3 to form a functional acyl-CoA desaturase complex. The cofactor is [2Fe-2S] cluster. Requires FAD as cofactor.

The protein localises to the cell membrane. It functions in the pathway lipid metabolism; fatty acid metabolism. Its function is as follows. Is likely involved in the aerobic desaturation system responsible for the synthesis of oleic acid from stearoyl-CoA; oleic acid is a precursor of mycobacterial membrane phospholipids and triglycerides. Is the electron transfer partner for the stearoyl-CoA 9-desaturase DesA3. Catalyzes electron transfer reaction between NADPH and the diiron center of DesA3. Cannot use NADH. This is NADPH oxidoreductase from Mycobacterium tuberculosis (strain ATCC 25618 / H37Rv).